A 305-amino-acid polypeptide reads, in one-letter code: DNA-directed RNA polymerase 35 kDa subunit (305 aa).

It belongs to the poxviridae DNA-directed RNA polymerase 35 kDa subunit family. As to quaternary structure, the DNA-dependent RNA polymerase used for intermediate and late genes expression consists of eight subunits 147 kDa, 133 kDa, 35 kDa, 30 kDa, 22 kDa, 19 kDa, 18 kDa and 7 kDa totalling more than 500 kDa in mass. The same holoenzyme, with the addition of the transcription-specificity factor RAP94, is used for early gene expression.

The protein localises to the virion. The catalysed reaction is RNA(n) + a ribonucleoside 5'-triphosphate = RNA(n+1) + diphosphate. Part of the DNA-dependent RNA polymerase which catalyzes the transcription of viral DNA into RNA using the four ribonucleoside triphosphates as substrates. Responsible for the transcription of early, intermediate and late genes. DNA-dependent RNA polymerase associates with the early transcription factor (ETF), itself composed of D6 and A7, thereby allowing the early genes transcription. Late transcription, and probably also intermediate transcription, require newly synthesized RNA polymerase. This is DNA-directed RNA polymerase 35 kDa subunit (RPO35) from Homo sapiens (Human).